The primary structure comprises 131 residues: Large-conductance mechanosensitive channel (131 aa).

Transmembrane regions (helical) follow at residues 8 to 28, 30 to 50, and 67 to 87; these read FAMR…GAFG, IVSS…LGGV, and GMFI…FVFV.

Belongs to the MscL family. Homopentamer.

It localises to the cell membrane. Functionally, channel that opens in response to stretch forces in the membrane lipid bilayer. May participate in the regulation of osmotic pressure changes within the cell. This is Large-conductance mechanosensitive channel from Geobacillus sp. (strain WCH70).